We begin with the raw amino-acid sequence, 351 residues long: DNA nickase (351 aa).

Fe cation is bound by residues histidine 241, glutamate 245, and histidine 303.

Functionally, acts as a DNA nickase. This Nostoc sp. (strain PCC 7120 / SAG 25.82 / UTEX 2576) protein is DNA nickase.